A 171-amino-acid chain; its full sequence is Cytochrome c-type biogenesis protein CcmE (171 aa).

The Cytoplasmic portion of the chain corresponds to 1-7; the sequence is MNRKQKR. Residues 8–28 form a helical; Signal-anchor for type II membrane protein membrane-spanning segment; the sequence is LAVIAGGMGFIAAAVLLVMFA. The Periplasmic portion of the chain corresponds to 29 to 171; the sequence is FSQSVAYFYM…NPGEEAKATQ (143 aa). Positions 124 and 128 each coordinate heme. The tract at residues 132–171 is disordered; the sequence is DVADRLKQQGLWKEGQGGQESPGKEGQGQENPGEEAKATQ.

This sequence belongs to the CcmE/CycJ family.

Its subcellular location is the cell inner membrane. Functionally, heme chaperone required for the biogenesis of c-type cytochromes. Transiently binds heme delivered by CcmC and transfers the heme to apo-cytochromes in a process facilitated by CcmF and CcmH. The chain is Cytochrome c-type biogenesis protein CcmE from Rhizobium leguminosarum bv. trifolii (strain WSM2304).